Here is a 499-residue protein sequence, read N- to C-terminus: RNA polymerase sigma factor SigA (499 aa).

Composition is skewed to basic residues over residues 1-12 and 77-87; these read MSSPKKNFKKPQ and KKRRGRKPKHA. Disordered stretches follow at residues 1-25 and 68-89; these read MSSP…LNEE and QENK…HAPL. A sigma-70 factor domain-2 region spans residues 252–322; sequence LVTSNLRLVV…TRAIADQART (71 aa). The short motif at 276 to 279 is the Interaction with polymerase core subunit RpoC element; the sequence is DLIQ. The segment at 331–412 is sigma-70 factor domain-3; the sequence is ETINRLAKAE…DTDAQMPDEF (82 aa). The tract at residues 425–480 is sigma-70 factor domain-4; it reads LLNNCLSEQEELIVRMRIGMPPYNETKTLDEVSQKIKIPREKIRQIETKAIRKLRQ. Positions 453–472 form a DNA-binding region, H-T-H motif; sequence LDEVSQKIKIPREKIRQIET.

Belongs to the sigma-70 factor family. RpoD/SigA subfamily. As to quaternary structure, interacts transiently with the RNA polymerase catalytic core.

It localises to the cytoplasm. Sigma factors are initiation factors that promote the attachment of RNA polymerase to specific initiation sites and are then released. This sigma factor is the primary sigma factor during exponential growth. The chain is RNA polymerase sigma factor SigA from Mycoplasma pneumoniae (strain ATCC 29342 / M129 / Subtype 1) (Mycoplasmoides pneumoniae).